Here is a 642-residue protein sequence, read N- to C-terminus: Threonine--tRNA ligase (642 aa).

The 61-residue stretch at 1 to 61 folds into the TGS domain; the sequence is MPVITLPDGS…ENDATLAIIT (61 aa). Residues 243-534 form a catalytic region; that stretch reads DHRKIGKQLD…LTEEFAGFFP (292 aa). Zn(2+)-binding residues include C334, H385, and H511.

It belongs to the class-II aminoacyl-tRNA synthetase family. Homodimer. Zn(2+) is required as a cofactor.

The protein resides in the cytoplasm. The enzyme catalyses tRNA(Thr) + L-threonine + ATP = L-threonyl-tRNA(Thr) + AMP + diphosphate + H(+). In terms of biological role, catalyzes the attachment of threonine to tRNA(Thr) in a two-step reaction: L-threonine is first activated by ATP to form Thr-AMP and then transferred to the acceptor end of tRNA(Thr). Also edits incorrectly charged L-seryl-tRNA(Thr). The sequence is that of Threonine--tRNA ligase from Salmonella paratyphi C (strain RKS4594).